Consider the following 177-residue polypeptide: Large ribosomal subunit protein uL6 (177 aa).

Belongs to the universal ribosomal protein uL6 family. Part of the 50S ribosomal subunit.

Functionally, this protein binds to the 23S rRNA, and is important in its secondary structure. It is located near the subunit interface in the base of the L7/L12 stalk, and near the tRNA binding site of the peptidyltransferase center. The polypeptide is Large ribosomal subunit protein uL6 (Idiomarina loihiensis (strain ATCC BAA-735 / DSM 15497 / L2-TR)).